A 228-amino-acid polypeptide reads, in one-letter code: 7-cyano-7-deazaguanine synthase (228 aa).

An ATP-binding site is contributed by 16-26 (FSGGQDSTTCL). C195, C203, C206, and C209 together coordinate Zn(2+).

This sequence belongs to the QueC family. It depends on Zn(2+) as a cofactor.

It catalyses the reaction 7-carboxy-7-deazaguanine + NH4(+) + ATP = 7-cyano-7-deazaguanine + ADP + phosphate + H2O + H(+). It participates in purine metabolism; 7-cyano-7-deazaguanine biosynthesis. Catalyzes the ATP-dependent conversion of 7-carboxy-7-deazaguanine (CDG) to 7-cyano-7-deazaguanine (preQ(0)). The chain is 7-cyano-7-deazaguanine synthase from Haemophilus influenzae (strain ATCC 51907 / DSM 11121 / KW20 / Rd).